Reading from the N-terminus, the 421-residue chain is UPF0415 protein C7orf25 homolog (421 aa).

It belongs to the UPF0415 family.

The protein is UPF0415 protein C7orf25 homolog of Rattus norvegicus (Rat).